A 180-amino-acid polypeptide reads, in one-letter code: uncharacterized protein (180 aa).

The first 22 residues, 1 to 22 (MKLRFISSALAAALFAATGSYA), serve as a signal peptide directing secretion. Cys41 and Cys81 are disulfide-bonded.

It belongs to the fimbrial protein family.

It localises to the fimbrium. This is an uncharacterized protein from Escherichia coli O157:H7.